We begin with the raw amino-acid sequence, 878 residues long: Alanine--tRNA ligase (878 aa).

4 residues coordinate Zn(2+): histidine 571, histidine 575, cysteine 673, and histidine 677.

It belongs to the class-II aminoacyl-tRNA synthetase family. Zn(2+) is required as a cofactor.

The protein localises to the cytoplasm. The catalysed reaction is tRNA(Ala) + L-alanine + ATP = L-alanyl-tRNA(Ala) + AMP + diphosphate. In terms of biological role, catalyzes the attachment of alanine to tRNA(Ala) in a two-step reaction: alanine is first activated by ATP to form Ala-AMP and then transferred to the acceptor end of tRNA(Ala). Also edits incorrectly charged Ser-tRNA(Ala) and Gly-tRNA(Ala) via its editing domain. This chain is Alanine--tRNA ligase, found in Syntrophus aciditrophicus (strain SB).